Here is a 510-residue protein sequence, read N- to C-terminus: NAD(P)H-quinone oxidoreductase subunit 2 A, chloroplastic (510 aa).

13 consecutive transmembrane segments (helical) span residues 24 to 44, 57 to 77, 99 to 119, 124 to 144, 149 to 169, 183 to 203, 229 to 249, 295 to 315, 323 to 343, 354 to 374, 395 to 415, 418 to 438, and 484 to 504; these read LLLF…GLIL, IPWL…ALLF, IFQF…VEYI, MAIT…MFLC, LITI…LSGY, YLLM…WLYG, ISIA…PAPF, WHLL…LIAI, MLAY…IVGD, YMLF…LFGL, ALSS…AGFF, LYLF…IGLL, and MILC…IIAI.

The protein belongs to the complex I subunit 2 family. NDH is composed of at least 16 different subunits, 5 of which are encoded in the nucleus.

It localises to the plastid. Its subcellular location is the chloroplast thylakoid membrane. It carries out the reaction a plastoquinone + NADH + (n+1) H(+)(in) = a plastoquinol + NAD(+) + n H(+)(out). It catalyses the reaction a plastoquinone + NADPH + (n+1) H(+)(in) = a plastoquinol + NADP(+) + n H(+)(out). NDH shuttles electrons from NAD(P)H:plastoquinone, via FMN and iron-sulfur (Fe-S) centers, to quinones in the photosynthetic chain and possibly in a chloroplast respiratory chain. The immediate electron acceptor for the enzyme in this species is believed to be plastoquinone. Couples the redox reaction to proton translocation, and thus conserves the redox energy in a proton gradient. In Piper cenocladum (Ant piper), this protein is NAD(P)H-quinone oxidoreductase subunit 2 A, chloroplastic.